Here is a 149-residue protein sequence, read N- to C-terminus: Flagellar assembly factor FliW (149 aa).

The protein belongs to the FliW family. Interacts with translational regulator CsrA and flagellin(s).

The protein localises to the cytoplasm. In terms of biological role, acts as an anti-CsrA protein, binds CsrA and prevents it from repressing translation of its target genes, one of which is flagellin. Binds to flagellin and participates in the assembly of the flagellum. The polypeptide is Flagellar assembly factor FliW (Thermotoga petrophila (strain ATCC BAA-488 / DSM 13995 / JCM 10881 / RKU-1)).